We begin with the raw amino-acid sequence, 254 residues long: Type III pantothenate kinase (254 aa).

6–13 (DVGNTNIV) provides a ligand contact to ATP. 107 to 110 (GADR) contacts substrate. D109 serves as the catalytic Proton acceptor. Residue D129 participates in K(+) binding. T132 is an ATP binding site. T184 contacts substrate.

The protein belongs to the type III pantothenate kinase family. Homodimer. Requires NH4(+) as cofactor. It depends on K(+) as a cofactor.

It localises to the cytoplasm. It carries out the reaction (R)-pantothenate + ATP = (R)-4'-phosphopantothenate + ADP + H(+). The protein operates within cofactor biosynthesis; coenzyme A biosynthesis; CoA from (R)-pantothenate: step 1/5. Functionally, catalyzes the phosphorylation of pantothenate (Pan), the first step in CoA biosynthesis. This chain is Type III pantothenate kinase, found in Exiguobacterium sp. (strain ATCC BAA-1283 / AT1b).